The following is a 1411-amino-acid chain: DNA-directed RNA polymerase subunit beta' (1411 aa).

Positions 70, 72, 85, and 88 each coordinate Zn(2+). Positions 460, 462, and 464 each coordinate Mg(2+). Positions 814, 889, 896, and 899 each coordinate Zn(2+). Positions 1387 to 1399 are enriched in polar residues; sequence RSTSSGTEITSPS. Residues 1387–1411 are disordered; the sequence is RSTSSGTEITSPSKDAIPLGSKVGF.

This sequence belongs to the RNA polymerase beta' chain family. The RNAP catalytic core consists of 2 alpha, 1 beta, 1 beta' and 1 omega subunit. When a sigma factor is associated with the core the holoenzyme is formed, which can initiate transcription. Requires Mg(2+) as cofactor. Zn(2+) serves as cofactor.

It catalyses the reaction RNA(n) + a ribonucleoside 5'-triphosphate = RNA(n+1) + diphosphate. DNA-dependent RNA polymerase catalyzes the transcription of DNA into RNA using the four ribonucleoside triphosphates as substrates. The sequence is that of DNA-directed RNA polymerase subunit beta' from Xylella fastidiosa (strain M12).